Consider the following 70-residue polypeptide: DNA gyrase inhibitor YacG (70 aa).

4 residues coordinate Zn(2+): cysteine 9, cysteine 12, cysteine 28, and cysteine 32. The segment at 43 to 70 is disordered; the sequence is ESRKIPGSSIDPESIVTSNNKQDNEDEQ.

It belongs to the DNA gyrase inhibitor YacG family. In terms of assembly, interacts with GyrB. Requires Zn(2+) as cofactor.

Functionally, inhibits all the catalytic activities of DNA gyrase by preventing its interaction with DNA. Acts by binding directly to the C-terminal domain of GyrB, which probably disrupts DNA binding by the gyrase. The protein is DNA gyrase inhibitor YacG of Legionella pneumophila (strain Paris).